Here is a 332-residue protein sequence, read N- to C-terminus: Abscisic acid-inducible protein kinase (332 aa).

ATP contacts are provided by residues 1–8 (GSGNFGVA) and Lys-23. The region spanning 1 to 250 (GSGNFGVAKL…IPEIKNHPWF (250 aa)) is the Protein kinase domain. Asp-113 serves as the catalytic Proton acceptor.

Belongs to the protein kinase superfamily. Ser/Thr protein kinase family. In terms of processing, autophosphorylated.

It catalyses the reaction L-seryl-[protein] + ATP = O-phospho-L-seryl-[protein] + ADP + H(+). The enzyme catalyses L-threonyl-[protein] + ATP = O-phospho-L-threonyl-[protein] + ADP + H(+). Its function is as follows. Involved in water-stress responses. The polypeptide is Abscisic acid-inducible protein kinase (Triticum aestivum (Wheat)).